We begin with the raw amino-acid sequence, 146 residues long: Large ribosomal subunit protein uL15 (146 aa).

The disordered stretch occupies residues 1-56 (MKLHELKAAEGANKASKRVGRGTGSGLGKTSGKGQNGQNSRSGGGVRPGFEGGQMP). 2 stretches are compositionally biased toward gly residues: residues 21 to 35 (RGTGSGLGKTSGKGQ) and 42 to 52 (SGGGVRPGFEG).

The protein belongs to the universal ribosomal protein uL15 family. As to quaternary structure, part of the 50S ribosomal subunit.

Functionally, binds to the 23S rRNA. The chain is Large ribosomal subunit protein uL15 from Clostridium botulinum (strain Langeland / NCTC 10281 / Type F).